Here is a 406-residue protein sequence, read N- to C-terminus: Transforming growth factor beta regulator 1 (406 aa).

Disordered stretches follow at residues 1-28 (MSVL…PRKS) and 109-144 (SSVG…ENSK). Ser-2 bears the N-acetylserine mark. A Phosphothreonine modification is found at Thr-13. Basic and acidic residues predominate over residues 134–144 (EKKEKGKENSK). The region spanning 177–236 (VFPIGLGGLTVYSLGEIITNRPGFHDENAIYPVGYCSTRVYASMKCPDQKCLYTCQIKDG) is the FYR N-terminal domain. The FYR C-terminal domain occupies 237 to 316 (GVQPQFEIVP…QNCVNYQWVK (80 aa)).

Belongs to the TBRG1 family. Interacts with CDKN2A and MDM2. In terms of processing, ubiquitinated; mediated by MDM2 and leading to its subsequent proteasomal degradation.

Its subcellular location is the nucleus. Its function is as follows. Acts as a growth inhibitor. Can activate p53/TP53, causes G1 arrest and collaborates with CDKN2A to restrict proliferation, but does not require either protein to inhibit DNA synthesis. Redistributes CDKN2A into the nucleoplasm. Involved in maintaining chromosomal stability. The chain is Transforming growth factor beta regulator 1 (Tbrg1) from Mus musculus (Mouse).